Consider the following 208-residue polypeptide: Small ribosomal subunit protein uS4 (208 aa).

Positions 97–160 (TRLDNVCYRM…QKQLRVQEAL (64 aa)) constitute an S4 RNA-binding domain.

This sequence belongs to the universal ribosomal protein uS4 family. As to quaternary structure, part of the 30S ribosomal subunit. Contacts protein S5. The interaction surface between S4 and S5 is involved in control of translational fidelity.

Its function is as follows. One of the primary rRNA binding proteins, it binds directly to 16S rRNA where it nucleates assembly of the body of the 30S subunit. Functionally, with S5 and S12 plays an important role in translational accuracy. This is Small ribosomal subunit protein uS4 from Xanthomonas axonopodis pv. citri (strain 306).